The following is a 1259-amino-acid chain: Zinc finger protein BRUTUS-like At1g74770 (1259 aa).

A helical transmembrane segment spans residues Leu-441–Phe-461. Composition is skewed to basic and acidic residues over residues Lys-904 to Lys-916 and Glu-924 to Ser-934. The segment at Lys-904–Ser-938 is disordered. A CHY-type zinc finger spans residues Pro-1018 to Ser-1087. 24 residues coordinate Zn(2+): Cys-1025, His-1027, Cys-1038, Cys-1039, Cys-1045, Cys-1048, His-1049, His-1055, Cys-1067, Cys-1070, Cys-1080, Cys-1085, Cys-1094, Cys-1097, His-1108, Cys-1109, Cys-1112, Cys-1115, His-1127, Cys-1128, Cys-1131, Cys-1134, His-1142, and Cys-1144. The CTCHY-type zinc-finger motif lies at Met-1089–Asn-1152. The RING-type; atypical zinc-finger motif lies at Cys-1153–Ser-1195.

In terms of assembly, binds zinc and iron ions.

It is found in the membrane. It localises to the nucleus. Its pathway is protein modification; protein ubiquitination. Its function is as follows. Probable E3 ubiquitin-protein ligase that may regulate the response to iron deficiency and thus contributes to iron homeostasis. The protein is Zinc finger protein BRUTUS-like At1g74770 of Arabidopsis thaliana (Mouse-ear cress).